The primary structure comprises 280 residues: MSLKPYFSLLYSSPTNVKLSNFLIAQQPSGDLKTTPAEEFSPLVEKFNRRLLLGVGSSSVLAIGANFGGTTSFILGLSPGIGRNLKLDVIYPIGGYSRCIDTVEGFEFIYPATWVGDQTLLYRAAEKSERENSLDLPPARNSRRKNVNEPVVAFGPPGSTGELNVSVIVSPVSPSFSIEAFGGPKEVGEAIVRTVTGSGQRADLKGTLLESSIRQDSERNLKYYELEFKVESPLFRRHNVAVCCAHSGRLYTLNAQAPESAWSEVKSEIYTTAKSFNIIS.

Residues 1 to 36 constitute a chloroplast transit peptide; that stretch reads MSLKPYFSLLYSSPTNVKLSNFLIAQQPSGDLKTTP.

This sequence belongs to the PsbP family.

The protein resides in the plastid. The protein localises to the chloroplast. This Arabidopsis thaliana (Mouse-ear cress) protein is PsbP domain-containing protein 7, chloroplastic (PPD7).